Reading from the N-terminus, the 240-residue chain is Endo-chitosanase B (240 aa).

Positions 1 to 17 (MRLSEILAVALVTGATA) are cleaved as a signal peptide. Residue asparagine 86 is glycosylated (N-linked (GlcNAc...) asparagine).

This sequence belongs to the glycosyl hydrolase 75 family.

It localises to the secreted. The catalysed reaction is Endohydrolysis of beta-(1-&gt;4)-linkages between D-glucosamine residues in a partly acetylated chitosan.. Chitosanase catalyzing the endo-type cleavage of chitosan, the deacylated form of chitin. Chitosanase may be crucial in the degradation of the deacetylated portion of chitin in the fungal cell wall. Chitoolisaccharides produced by the hydrolysis of partially N-acetylated chitosan are known to have many biological activities, including antibacterial activity, immune-enhancing effects, and elicitor activity. The polypeptide is Endo-chitosanase B (csnB) (Aspergillus oryzae (Yellow koji mold)).